The sequence spans 71 residues: IRCFITPDITSKDCPNGHVCYTKTWCDAFCSIRGKRVDLGCAATCPTVKTGVDIQCCSTDDCDPFPTRKRP.

5 disulfides stabilise this stretch: C3-C20, C14-C41, C26-C30, C45-C56, and C57-C62.

Belongs to the three-finger toxin family. Long-chain subfamily. Type II alpha-neurotoxin sub-subfamily. In terms of tissue distribution, expressed by the venom gland.

Its subcellular location is the secreted. Binds with high affinity to muscular (alpha-1/CHRNA1) and neuronal (alpha-7/CHRNA7) nicotinic acetylcholine receptor (nAChR) and inhibits acetylcholine from binding to the receptor, thereby impairing neuromuscular and neuronal transmission. In Naja naja (Indian cobra), this protein is Long neurotoxin 3.